The chain runs to 166 residues: NAD(P)H-quinone oxidoreductase subunit I, chloroplastic (166 aa).

2 consecutive 4Fe-4S ferredoxin-type domains span residues 55–84 (GRIH…VDWK) and 95–124 (LNYS…MTEE). Positions 64, 67, 70, 74, 104, 107, 110, and 114 each coordinate [4Fe-4S] cluster.

The protein belongs to the complex I 23 kDa subunit family. NDH is composed of at least 16 different subunits, 5 of which are encoded in the nucleus. Requires [4Fe-4S] cluster as cofactor.

It localises to the plastid. Its subcellular location is the chloroplast thylakoid membrane. It carries out the reaction a plastoquinone + NADH + (n+1) H(+)(in) = a plastoquinol + NAD(+) + n H(+)(out). The catalysed reaction is a plastoquinone + NADPH + (n+1) H(+)(in) = a plastoquinol + NADP(+) + n H(+)(out). Functionally, NDH shuttles electrons from NAD(P)H:plastoquinone, via FMN and iron-sulfur (Fe-S) centers, to quinones in the photosynthetic chain and possibly in a chloroplast respiratory chain. The immediate electron acceptor for the enzyme in this species is believed to be plastoquinone. Couples the redox reaction to proton translocation, and thus conserves the redox energy in a proton gradient. The sequence is that of NAD(P)H-quinone oxidoreductase subunit I, chloroplastic from Pentanema britannica (British yellowhead).